We begin with the raw amino-acid sequence, 262 residues long: MSHPMSQSQPATVKHDTLFTTPLDKAARFSFDEQVVACFPDMIRRSVPGYGQVLAMLPIFARRHCKYRQQGDNGQRVSRIYDLGCSLGAASMTLAGEFESQDLQIKAIDISPAMTTEATTLLSDNYPEHDIEVITADIRDIEFEPCDMVILNLTLQFLPAADRVAVLEKIYAALSEGGILVLTEKTHAFDEQYDAWLVERYYDFKRANGYTEMEISGKRNALENVLITDTLDEHHTRLAQVGFQRHLTWFQFLNFVSIVAFK.

Residues Tyr-50, 84-86, 137-138, Asn-152, and Arg-219 each bind S-adenosyl-L-methionine; these read GCS and DI.

The protein belongs to the class I-like SAM-binding methyltransferase superfamily. Cx-SAM synthase family. Homodimer.

It carries out the reaction prephenate + S-adenosyl-L-methionine = carboxy-S-adenosyl-L-methionine + 3-phenylpyruvate + H2O. Catalyzes the conversion of S-adenosyl-L-methionine (SAM) to carboxy-S-adenosyl-L-methionine (Cx-SAM). This chain is Carboxy-S-adenosyl-L-methionine synthase, found in Psychrobacter arcticus (strain DSM 17307 / VKM B-2377 / 273-4).